The following is a 376-amino-acid chain: UPF0754 membrane protein BH1148 (376 aa).

2 helical membrane-spanning segments follow: residues 3–23 and 355–375; these read LILF…SLAI and YLGA…ILLI.

The protein belongs to the UPF0754 family.

The protein resides in the cell membrane. This Halalkalibacterium halodurans (strain ATCC BAA-125 / DSM 18197 / FERM 7344 / JCM 9153 / C-125) (Bacillus halodurans) protein is UPF0754 membrane protein BH1148.